A 131-amino-acid polypeptide reads, in one-letter code: Nuclear envelope phosphatase-regulatory subunit 1 homolog (131 aa).

2 consecutive transmembrane segments (helical) span residues 33–53 and 68–88; these read LLAV…WYWL and WIHP…ILGI.

The protein belongs to the CNEP1R1 family.

It is found in the nucleus membrane. Its subcellular location is the cytoplasm. Its function is as follows. May form with the serine/threonine protein phosphatase l(1)G0269 an active complex dephosphorylating and activating lipin-like phosphatases. Lipins are phosphatidate phosphatases that catalyze the conversion of phosphatidic acid to diacylglycerol and control the metabolism of fatty acids at different levels. The polypeptide is Nuclear envelope phosphatase-regulatory subunit 1 homolog (Drosophila melanogaster (Fruit fly)).